The following is a 514-amino-acid chain: Uronyl 2-sulfotransferase homolog pip (514 aa).

Topologically, residues 1-30 are cytoplasmic; it reads MSLNAERSYKMKLRDVENAFKYRRIPYPKR. A helical; Signal-anchor for type II membrane protein transmembrane segment spans residues 31–50; the sequence is SVELIALLAISCTFFLFMHT. Residues 51-514 are Lumenal-facing; it reads NKLNSRLKEM…EQQNEYNEDY (464 aa). Positions 112-121 are enriched in basic and acidic residues; sequence HDRRSSEEQL. The interval 112 to 185 is disordered; the sequence is HDRRSSEEQL…DEDEVEENDD (74 aa). The span at 127–140 shows a compositional bias: basic residues; that stretch reads HGHHHDHHSHHHHM. Residues 155-170 show a composition bias toward basic and acidic residues; sequence HDKQLAVPDNKHKEDE. Acidic residues predominate over residues 171 to 185; the sequence is VHYEDDEDEVEENDD. A glycan (N-linked (GlcNAc...) asparagine) is linked at asparagine 207. Histidine 282 is an active-site residue. N-linked (GlcNAc...) asparagine glycosylation is found at asparagine 287, asparagine 416, asparagine 451, and asparagine 467.

Belongs to the sulfotransferase 3 family. As to quaternary structure, interacts with wbl/windbeutel; the interaction is direct and does not require pip to be folded. As to expression, ovary-specific. Specifically expressed in the ventral follicle cells of stage 9-10 egg chambers. Expressed in ovaries. Specifically expressed in the ventral follicle cells of stage 9-10 egg chambers.

The protein resides in the golgi apparatus membrane. Its function is as follows. Sulfotransferase involved in dorsoventral axis patterning in early embryos. Required for the ventral activation of ea/easter by the protease snk in the perivitelline space between the embryonic membrane and the eggshell; activation of ea requires both activation of the ndl-gd-snk protease cascade and sulfation of a vitelline membrane component by pip. Probably acts by mediating the sulfation of some glycoprotein or glycosaminoglycan stably deposited in the vitelline membrane, whose ventrally localized modification leads to spatially restricted activation of the protease cascade resulting in localized activation of the spz Toll receptor ligand by ea. Probably required redundantly with isoform H for dorsoventral axis patterning in embryos. Lacks 2-O-sulfotransferase activity towards completely desulfated N-sulfated (CDSNS) heparin, chondroitin, and chondroitin sulfate A, B (dermatan sulfate), and C. Sulfates several components of the eggshell vitelline membrane, including Vml, Vm26Aa, Vm32E and psd/palisade/Fcp26Aa. Functionally, probably required redundantly with isoform A for dorsoventral axis patterning in embryos. In terms of biological role, lacks 2-O-sulfotransferase activity towards CDSNS heparin, chondroitin, and chondroitin sulfate A, B (dermatan sulfate), and C. In Drosophila melanogaster (Fruit fly), this protein is Uronyl 2-sulfotransferase homolog pip.